The primary structure comprises 189 residues: Calcyphosin (189 aa).

EF-hand domains lie at 21 to 56 (SGIQGVARFFRRLDQDGSRSLDVRELQRGLAELGLV), 57 to 92 (LDTAEMEGVCRRWDRDGSGTLDLEEFLRALRPPMSQ), 93 to 128 (AREAVVTAAFAKLDRSGDGVVTVDDLRGVYSGRTHP), and 136 to 172 (TEEQVLRHFLDNFDSSEKDGQVTLAEFQDYYSGVSAS). 14 residues coordinate Ca(2+): D34, D36, S38, S40, E45, D70, D72, S74, T76, E81, D106, S108, D110, and D117. S40 is modified (phosphoserine; by PKA).

As to quaternary structure, monomer. Does not form oligomers in the presence of calcium.

It localises to the cytoplasm. In terms of biological role, calcium-binding protein. May play a role in cellular signaling events (Potential). This chain is Calcyphosin (CAPS), found in Bos taurus (Bovine).